The chain runs to 209 residues: Large ribosomal subunit protein uL3 (209 aa).

Q150 is modified (N5-methylglutamine).

Belongs to the universal ribosomal protein uL3 family. Part of the 50S ribosomal subunit. Forms a cluster with proteins L14 and L19. In terms of processing, methylated by PrmB.

Its function is as follows. One of the primary rRNA binding proteins, it binds directly near the 3'-end of the 23S rRNA, where it nucleates assembly of the 50S subunit. This chain is Large ribosomal subunit protein uL3, found in Pasteurella multocida (strain Pm70).